Here is a 188-residue protein sequence, read N- to C-terminus: Josephin-2 (188 aa).

Residues 11–188 (PPSVYHERQR…EEAGCWLNTS (178 aa)) form the Josephin domain. Cys24 serves as the catalytic Nucleophile. The Proton acceptor role is filled by His125.

It is found in the cytoplasm. Its subcellular location is the cytosol. The catalysed reaction is Thiol-dependent hydrolysis of ester, thioester, amide, peptide and isopeptide bonds formed by the C-terminal Gly of ubiquitin (a 76-residue protein attached to proteins as an intracellular targeting signal).. Functionally, cleaves 'Lys-63'-linked poly-ubiquitin chains, and with lesser efficiency 'Lys-48'-linked poly-ubiquitin chains (in vitro). May act as a deubiquitinating enzyme. The chain is Josephin-2 (Josd2) from Mus musculus (Mouse).